A 271-amino-acid polypeptide reads, in one-letter code: Putative pyruvate, phosphate dikinase regulatory protein 1 (271 aa).

ADP is bound at residue 156 to 163 (GVSRTSKT).

It belongs to the pyruvate, phosphate/water dikinase regulatory protein family. PDRP subfamily.

The catalysed reaction is N(tele)-phospho-L-histidyl/L-threonyl-[pyruvate, phosphate dikinase] + ADP = N(tele)-phospho-L-histidyl/O-phospho-L-threonyl-[pyruvate, phosphate dikinase] + AMP + H(+). The enzyme catalyses N(tele)-phospho-L-histidyl/O-phospho-L-threonyl-[pyruvate, phosphate dikinase] + phosphate + H(+) = N(tele)-phospho-L-histidyl/L-threonyl-[pyruvate, phosphate dikinase] + diphosphate. Functionally, bifunctional serine/threonine kinase and phosphorylase involved in the regulation of the pyruvate, phosphate dikinase (PPDK) by catalyzing its phosphorylation/dephosphorylation. The sequence is that of Putative pyruvate, phosphate dikinase regulatory protein 1 from Staphylococcus saprophyticus subsp. saprophyticus (strain ATCC 15305 / DSM 20229 / NCIMB 8711 / NCTC 7292 / S-41).